Reading from the N-terminus, the 928-residue chain is DNA ligase 4 (928 aa).

Residues Glu-302, Lys-304, Arg-309, Glu-362, Phe-409, Glu-469, Lys-474, Lys-492, and Lys-494 each contribute to the ATP site. The active-site N6-AMP-lysine intermediate is Lys-304. Glu-362 serves as a coordination point for Mg(2+). Residue Glu-469 coordinates Mg(2+). BRCT domains are found at residues 673 to 769 (VESD…PYFI) and 821 to 927 (PWIY…DYKF).

Belongs to the ATP-dependent DNA ligase family. The cofactor is Mg(2+).

The protein resides in the nucleus. The enzyme catalyses ATP + (deoxyribonucleotide)n-3'-hydroxyl + 5'-phospho-(deoxyribonucleotide)m = (deoxyribonucleotide)n+m + AMP + diphosphate.. In terms of biological role, DNA ligase involved in DNA non-homologous end joining (NHEJ); required for double-strand break (DSB) repair. Not required for the repair of DSBs induced by ionizing radiation or UV light. Has an important role in morphogenesis, positively affecting the capacity to form hyphae. The polypeptide is DNA ligase 4 (LIG4) (Candida albicans (strain SC5314 / ATCC MYA-2876) (Yeast)).